The primary structure comprises 385 residues: Galactokinase (385 aa).

Residue 34–37 (EHTD) coordinates substrate. An ATP-binding site is contributed by 124–130 (SAGLSSS). Mg(2+) is bound by residues S130 and E162. Residue D174 is the Proton acceptor of the active site. Y223 contributes to the substrate binding site.

The protein belongs to the GHMP kinase family. GalK subfamily.

The protein resides in the cytoplasm. It catalyses the reaction alpha-D-galactose + ATP = alpha-D-galactose 1-phosphate + ADP + H(+). It functions in the pathway carbohydrate metabolism; galactose metabolism. Its function is as follows. Catalyzes the transfer of the gamma-phosphate of ATP to D-galactose to form alpha-D-galactose-1-phosphate (Gal-1-P). This chain is Galactokinase, found in Pasteurella multocida (strain Pm70).